A 372-amino-acid polypeptide reads, in one-letter code: Caytaxin (372 aa).

Residues 1–58 (MGTTEATLRMENVDVRDEWQDEDLPRPLPEDTGVERLGGAVEDSSSPPSTLNLSGAHR) are disordered. The span at 11-29 (ENVDVRDEWQDEDLPRPLP) shows a compositional bias: basic and acidic residues. A compositionally biased stretch (polar residues) spans 43–53 (DSSSPPSTLNL). S54 bears the Phosphoserine mark. Residues 115–120 (ELEWED) form a required for interaction with KLC1 region. The CRAL-TRIO domain occupies 171-328 (IRPYMKVVTH…CVLQYEEQRL (158 aa)). The mediates interaction with GLS stretch occupies residues 190-372 (AIIVFAACFL…ATEDQETSMS (183 aa)). Positions 329 to 372 (RAKRESTRPPQPEFLLPRSEEKPETVEEEDRAAEATEDQETSMS) are disordered. The span at 354–372 (VEEEDRAAEATEDQETSMS) shows a compositional bias: acidic residues.

As to quaternary structure, interacts with KLC1; may link mitochondria to KLC1 and regulate mitochondria localization into neuron projections. Interacts with GLS; the interaction is direct and may control GLS localization, negatively regulating its activity. Interacts with PIN1 (via WW domain); upon NGF stimulation. The interaction with PIN1 and GLS is competitive. Post-translationally, cleaved by CASP3 and CASP7. The potential C-terminal product released by CASP3 cleavage may inhibit the ERK signaling pathway through MAP2K2. May be ubiquitinated by STUB1. In terms of tissue distribution, neuronal tissues specific. Strongly expressed in brain. Expressed in virtually all parts of the adult brain, including cortex, cerebellum and olfactory bulbs. Enriched in hippocampus, cerebellar cortex, deep cerebellar nuclei, and pontine nuclei (at protein level).

Its subcellular location is the cell projection. It localises to the axon. The protein localises to the dendrite. The protein resides in the presynapse. It is found in the mitochondrion. Its subcellular location is the growth cone. It localises to the cytoplasm. Its function is as follows. Functions in the development of neural tissues, particularly the postnatal maturation of the cerebellar cortex. May play a role in neurotransmission through regulation of glutaminase/GLS, an enzyme responsible for the production in neurons of the glutamate neurotransmitter. Alternatively, may regulate the localization of mitochondria within axons and dendrites. The chain is Caytaxin (Atcay) from Mus musculus (Mouse).